Here is a 301-residue protein sequence, read N- to C-terminus: Homoserine O-acetyltransferase (301 aa).

Cys-142 acts as the Acyl-thioester intermediate in catalysis. Lys-163 and Ser-192 together coordinate substrate. Catalysis depends on His-235, which acts as the Proton acceptor. The active site involves Glu-237. A substrate-binding site is contributed by Arg-249.

This sequence belongs to the MetA family.

The protein resides in the cytoplasm. The catalysed reaction is L-homoserine + acetyl-CoA = O-acetyl-L-homoserine + CoA. Its pathway is amino-acid biosynthesis; L-methionine biosynthesis via de novo pathway; O-acetyl-L-homoserine from L-homoserine: step 1/1. In terms of biological role, transfers an acetyl group from acetyl-CoA to L-homoserine, forming acetyl-L-homoserine. In Bacillus subtilis (strain 168), this protein is Homoserine O-acetyltransferase.